The primary structure comprises 1393 residues: DNA-directed RNA polymerase subunit beta' (1393 aa).

Zn(2+)-binding residues include C70, C72, C85, and C88. The Mg(2+) site is built by D461, D463, and D465. Residues C815, C889, C896, and C899 each contribute to the Zn(2+) site.

Belongs to the RNA polymerase beta' chain family. In terms of assembly, the RNAP catalytic core consists of 2 alpha, 1 beta, 1 beta' and 1 omega subunit. When a sigma factor is associated with the core the holoenzyme is formed, which can initiate transcription. Requires Mg(2+) as cofactor. It depends on Zn(2+) as a cofactor.

The enzyme catalyses RNA(n) + a ribonucleoside 5'-triphosphate = RNA(n+1) + diphosphate. Its function is as follows. DNA-dependent RNA polymerase catalyzes the transcription of DNA into RNA using the four ribonucleoside triphosphates as substrates. The chain is DNA-directed RNA polymerase subunit beta' from Vesicomyosocius okutanii subsp. Calyptogena okutanii (strain HA).